We begin with the raw amino-acid sequence, 335 residues long: Deoxyhypusine hydroxylase (335 aa).

HEAT-like PBS-type repeat units lie at residues 74–100, 107–133, 203–233, 241–267, and 274–301; these read LKHE…VLED, CRHE…LRDD, KRYR…LAEG, FRHE…TLSD, and VRHE…FVND. His76, Glu77, His109, and Glu110 together coordinate Fe cation. Residues His243, Glu244, His276, and Glu277 each coordinate Fe cation.

It belongs to the deoxyhypusine hydroxylase family. Requires Fe(2+) as cofactor.

The protein resides in the cytoplasm. The protein localises to the nucleus. It catalyses the reaction [eIF5A protein]-deoxyhypusine + AH2 + O2 = [eIF5A protein]-hypusine + A + H2O. Its pathway is protein modification; eIF5A hypusination. Its function is as follows. Catalyzes the hydroxylation of the N(6)-(4-aminobutyl)-L-lysine intermediate to form hypusine, an essential post-translational modification only found in mature eIF-5A factor. In Coccidioides immitis (strain RS) (Valley fever fungus), this protein is Deoxyhypusine hydroxylase.